A 277-amino-acid chain; its full sequence is Large ribosomal subunit protein uL2 (277 aa).

Positions 219–277 are disordered; that stretch reads TVRGSVMNPNDHPHGGGEGRSPIGHPSPRTPWGKPALGYKTRKNKKYSDRFIVKRRHDK.

Belongs to the universal ribosomal protein uL2 family. Part of the 50S ribosomal subunit. Forms a bridge to the 30S subunit in the 70S ribosome.

In terms of biological role, one of the primary rRNA binding proteins. Required for association of the 30S and 50S subunits to form the 70S ribosome, for tRNA binding and peptide bond formation. It has been suggested to have peptidyltransferase activity; this is somewhat controversial. Makes several contacts with the 16S rRNA in the 70S ribosome. The polypeptide is Large ribosomal subunit protein uL2 (Clostridium botulinum (strain 657 / Type Ba4)).